The sequence spans 129 residues: Large ribosomal subunit protein bL20 (129 aa).

Positions 1 to 17 (MARVKRSVNAHKKRRSV) are enriched in basic residues. A disordered region spans residues 1–29 (MARVKRSVNAHKKRRSVLKASKGYRGQRS).

It belongs to the bacterial ribosomal protein bL20 family.

Its function is as follows. Binds directly to 23S ribosomal RNA and is necessary for the in vitro assembly process of the 50S ribosomal subunit. It is not involved in the protein synthesizing functions of that subunit. The protein is Large ribosomal subunit protein bL20 of Mycobacterium ulcerans (strain Agy99).